Reading from the N-terminus, the 23-residue chain is U1-poneritoxin-Da3b (23 aa).

This sequence belongs to the non-disulfide-bridged peptide (NDBP) superfamily. Medium-length antimicrobial peptide (group 3) family. Ponericin-W subfamily. In terms of tissue distribution, expressed by the venom gland.

The protein resides in the secreted. Its subcellular location is the target cell membrane. Its function is as follows. May have antimicrobial properties, like most ant linear peptides. May act by disrupting the integrity of the bacterial cell membrane. The polypeptide is U1-poneritoxin-Da3b (Dinoponera australis (Giant neotropical hunting ant)).